Consider the following 242-residue polypeptide: 3-deoxy-manno-octulosonate cytidylyltransferase (242 aa).

It belongs to the KdsB family.

The protein resides in the cytoplasm. The enzyme catalyses 3-deoxy-alpha-D-manno-oct-2-ulosonate + CTP = CMP-3-deoxy-beta-D-manno-octulosonate + diphosphate. It functions in the pathway nucleotide-sugar biosynthesis; CMP-3-deoxy-D-manno-octulosonate biosynthesis; CMP-3-deoxy-D-manno-octulosonate from 3-deoxy-D-manno-octulosonate and CTP: step 1/1. The protein operates within bacterial outer membrane biogenesis; lipopolysaccharide biosynthesis. Activates KDO (a required 8-carbon sugar) for incorporation into bacterial lipopolysaccharide in Gram-negative bacteria. This is 3-deoxy-manno-octulosonate cytidylyltransferase from Anaeromyxobacter dehalogenans (strain 2CP-1 / ATCC BAA-258).